We begin with the raw amino-acid sequence, 711 residues long: DNA topoisomerase 3 (711 aa).

A Toprim domain is found at 2–135; the sequence is KSLILAEKPS…LRRLWISSVT (134 aa). The Mg(2+) site is built by glutamate 8 and aspartate 104. The Topo IA-type catalytic domain occupies 152–580; it reads YNDLYYAALA…EMKDFTKDVV (429 aa). Positions 186–191 are interaction with DNA; the sequence is SLGRVQ. The active-site O-(5'-phospho-DNA)-tyrosine intermediate is tyrosine 305. Residues 691–711 are disordered; it reads MNKNEGLDNNPFKDALKNLNL.

The protein belongs to the type IA topoisomerase family. It depends on Mg(2+) as a cofactor.

The catalysed reaction is ATP-independent breakage of single-stranded DNA, followed by passage and rejoining.. Functionally, releases the supercoiling and torsional tension of DNA, which is introduced during the DNA replication and transcription, by transiently cleaving and rejoining one strand of the DNA duplex. Introduces a single-strand break via transesterification at a target site in duplex DNA. The scissile phosphodiester is attacked by the catalytic tyrosine of the enzyme, resulting in the formation of a DNA-(5'-phosphotyrosyl)-enzyme intermediate and the expulsion of a 3'-OH DNA strand. The free DNA strand then undergoes passage around the unbroken strand, thus removing DNA supercoils. Finally, in the religation step, the DNA 3'-OH attacks the covalent intermediate to expel the active-site tyrosine and restore the DNA phosphodiester backbone. This is DNA topoisomerase 3 from Staphylococcus aureus (strain MRSA252).